The chain runs to 277 residues: Probable endonuclease 4 (277 aa).

Residues His-67, His-107, Glu-141, Asp-173, His-176, His-207, Asp-220, His-222, and Glu-252 each contribute to the Zn(2+) site.

It belongs to the AP endonuclease 2 family. It depends on Zn(2+) as a cofactor.

The enzyme catalyses Endonucleolytic cleavage to 5'-phosphooligonucleotide end-products.. In terms of biological role, endonuclease IV plays a role in DNA repair. It cleaves phosphodiester bonds at apurinic or apyrimidinic (AP) sites, generating a 3'-hydroxyl group and a 5'-terminal sugar phosphate. The sequence is that of Probable endonuclease 4 from Finegoldia magna (strain ATCC 29328 / DSM 20472 / WAL 2508) (Peptostreptococcus magnus).